Consider the following 227-residue polypeptide: 7-cyano-7-deazaguanine synthase (227 aa).

An ATP-binding site is contributed by 7–17 (LSGGMDSLVTT). 4 residues coordinate Zn(2+): Cys-187, Cys-195, Cys-198, and Cys-201.

Belongs to the QueC family. Zn(2+) is required as a cofactor.

The enzyme catalyses 7-carboxy-7-deazaguanine + NH4(+) + ATP = 7-cyano-7-deazaguanine + ADP + phosphate + H2O + H(+). It functions in the pathway purine metabolism; 7-cyano-7-deazaguanine biosynthesis. Catalyzes the ATP-dependent conversion of 7-carboxy-7-deazaguanine (CDG) to 7-cyano-7-deazaguanine (preQ(0)). The sequence is that of 7-cyano-7-deazaguanine synthase from Chlorobium luteolum (strain DSM 273 / BCRC 81028 / 2530) (Pelodictyon luteolum).